The sequence spans 257 residues: Transcription factor GHD7 (257 aa).

Position 68 is a phosphoserine; by CK1 (Ser68). The region spanning 190-232 (REAKLMRYKEKRKKRCYEKQIRYASRKAYAEMRPRVRGRFAKE) is the CCT domain. The short motif at 198-204 (KEKRKKR) is the Nuclear localization signal element. Residues 226-245 (RGRFAKEPDQEAVAPPSTYV) are disordered.

In terms of assembly, interacts with HD16/EL1. In terms of processing, phosphorylated at Ser-68 by HD16/EL1, a casein kinase 1. As to expression, expressed in the apical meristem, developing leaves, leaf sheaths of young seedling, root meristem, epidermal layer of developing stems and branch-primordia of developing panicles.

It localises to the nucleus. In terms of biological role, probable transcription factor involved in the regulation of flowering time under long day (LD) conditions. Plays a major role as repressor of flowering. Controls flowering time by negatively regulating the expression of EHD1 and HD3A. This chain is Transcription factor GHD7, found in Oryza sativa subsp. japonica (Rice).